A 416-amino-acid polypeptide reads, in one-letter code: Formyl-CoA:oxalate CoA-transferase (416 aa).

CoA is bound by residues Gln-17 to Ser-18, Arg-38, Leu-72 to Lys-75, Asn-96 to His-98, His-104, and Lys-137 to Glu-140. Asp-169 serves as the catalytic Nucleophile. Gly-248–Gln-250 contacts substrate. Residue Gln-273–Gln-275 participates in CoA binding.

This sequence belongs to the CoA-transferase III family. Frc subfamily. As to quaternary structure, homodimer.

It carries out the reaction formyl-CoA + oxalate = oxalyl-CoA + formate. Its pathway is metabolic intermediate degradation; oxalate degradation; CO(2) and formate from oxalate: step 1/2. Functionally, involved in the catabolism of oxalate and in the adapatation to low pH via the induction of the oxalate-dependent acid tolerance response (ATR). Catalyzes the transfer of the CoA moiety from formyl-CoA to oxalate. The sequence is that of Formyl-CoA:oxalate CoA-transferase from Escherichia coli O6:H1 (strain CFT073 / ATCC 700928 / UPEC).